The following is a 1049-amino-acid chain: Multiple C2 domain and transmembrane region protein 16 (1049 aa).

Positions 1–112 (MATTRKLVVE…VGQGEEALIY (112 aa)) constitute a C2 1 domain. Residues 136-249 (DEKPPPLKPT…PPQNQPDGED (114 aa)) are disordered. Basic and acidic residues-rich tracts occupy residues 153-170 (VEEK…ESKP) and 226-238 (ESDK…KPVE). C2 domains are found at residues 302 to 426 (TSEI…PQWY), 460 to 582 (TAGN…SRWL), and 617 to 745 (VCSD…RNTY). Residues Ser-338, Asp-390, Thr-393, and Ser-398 each coordinate Ca(2+). 2 helical membrane passes run 883–903 (VMLI…LFVI) and 989–1009 (ATGI…LVPT).

It belongs to the MCTP family. Requires Ca(2+) as cofactor. As to expression, expressed in the vascular tissues of roots, cotyledons and rosette leaves. Accumulates in roots meristems and shoot apical meristems (SAMs). Observed in flowers.

The protein localises to the endoplasmic reticulum membrane. May function as a signaling molecule by regulating the trafficking of other regulators. The sequence is that of Multiple C2 domain and transmembrane region protein 16 from Arabidopsis thaliana (Mouse-ear cress).